We begin with the raw amino-acid sequence, 416 residues long: CC-adding tRNA nucleotidyltransferase (416 aa).

31 to 34 contributes to the CTP binding site; the sequence is GAVR. Mg(2+)-binding residues include Asp-46 and Asp-48. CTP-binding positions include 106 to 107, Asn-111, 148 to 157, and Arg-188; these read RD and DPLRLLRAYR.

Belongs to the tRNA nucleotidyltransferase/poly(A) polymerase family. Mg(2+) serves as cofactor.

The enzyme catalyses a tRNA precursor + 2 CTP = a tRNA with a 3' CC end + 2 diphosphate. Its function is as follows. tRNA nucleotidyltransferase involved in the synthesis of the tRNA CCA terminus. Adds the two cytidine residues to tRNA. This is CC-adding tRNA nucleotidyltransferase from Synechocystis sp. (strain ATCC 27184 / PCC 6803 / Kazusa).